A 142-amino-acid polypeptide reads, in one-letter code: MPPKTRGAVRKPRRKDKKNIALGQAHIKSTFNNTIVSITDPNGAVSITDPNGAVISWASAGEVGFKGSRKSTPFAAQMAAEAAAKRAQEHGLRKVDVFVKGPGSGRETAIRSLQAAGLEVGSIQDVTPSAHNGCRPPKRRRV.

Residues 1 to 21 (MPPKTRGAVRKPRRKDKKNIA) form a disordered region. Residues 7 to 17 (GAVRKPRRKDK) show a composition bias toward basic residues.

The protein belongs to the universal ribosomal protein uS11 family. Part of the 30S ribosomal subunit. Interacts with proteins S7 and S18. Binds to IF-3.

Located on the platform of the 30S subunit, it bridges several disparate RNA helices of the 16S rRNA. Forms part of the Shine-Dalgarno cleft in the 70S ribosome. This is Small ribosomal subunit protein uS11 from Paenarthrobacter aurescens (strain TC1).